Consider the following 543-residue polypeptide: Cytochrome P450 monooxygenase sphH (543 aa).

2 consecutive transmembrane segments (helical) span residues 1–21 (MGPIHNYFGVVCLGIAASVYF) and 32–52 (IATFAVLLTGIAISKLLYQLF). C487 provides a ligand contact to heme.

The protein belongs to the cytochrome P450 family. The cofactor is heme.

It localises to the membrane. The enzyme catalyses presphingofungin + 2 reduced [NADPH--hemoprotein reductase] + O2 = sphingofungin B1 + 2 oxidized [NADPH--hemoprotein reductase] + H2O + 2 H(+). It functions in the pathway secondary metabolite biosynthesis. In terms of biological role, cytochrome P450 monooxygenase; part of the gene cluster that mediates the biosynthesis of sphingofungins, bioactive molecules acting as sphingolipid inhibitors via inhibiting serine palmitoyl transferase (SPT). Within the pathway, sphH catalyzes the conversion of presphingofungin into sphingofungin B1 via hydroxylagtion at position C-14. Sphingofungin biosynthesis starts with the PKS sphB that produces an C18 polyketide precursor 3-hydroxyoctadeca-4,10-dienoyl-ACP containing one delta-6 desaturation and one delta-12 desaturation. The aminoacyl transferase sphA uses the sphB product to produce 3-keto-presphingofungin by adding an aminomalonate molecule. SphF then reduces the C-3 ketone of 3-keto-presphingofungin which leads to presphingofungin. The cytochrome P450 monooxygenase sphH converts presphingofungin into sphingofungin B1 which is further converted to sphingofungin B by the dioxygenase sphC. SphC is also able to convert presphingofungin into sphingofungin B2. The acetyltransferase sphE acetylates sphingofungin B to produce sphingofungin C, but can also convert sphingofungin B1 into sphingofungin C1 and sphingofungin B2 into sphingofungin C2. Finally, sphingofungin C can be spontaneously converted into sphingofungin D. This Aspergillus fumigatus (strain CBS 144.89 / FGSC A1163 / CEA10) (Neosartorya fumigata) protein is Cytochrome P450 monooxygenase sphH.